We begin with the raw amino-acid sequence, 437 residues long: Lipopolysaccharide biosynthesis protein RfbH (437 aa).

This sequence belongs to the DegT/DnrJ/EryC1 family. Requires pyridoxal 5'-phosphate as cofactor.

Its pathway is bacterial outer membrane biogenesis; LPS O-antigen biosynthesis. The protein is Lipopolysaccharide biosynthesis protein RfbH (rfbH) of Salmonella typhimurium (strain LT2 / SGSC1412 / ATCC 700720).